The chain runs to 88 residues: Small ribosomal subunit protein bS20 (88 aa).

The tract at residues Met1–Arg25 is disordered.

It belongs to the bacterial ribosomal protein bS20 family.

Functionally, binds directly to 16S ribosomal RNA. This is Small ribosomal subunit protein bS20 from Cupriavidus pinatubonensis (strain JMP 134 / LMG 1197) (Cupriavidus necator (strain JMP 134)).